Reading from the N-terminus, the 406-residue chain is Autotransporter heptosyltransferase TibC (406 aa).

ADP-D-glycero-beta-D-manno-heptose is bound by residues threonine 107, leucine 108, and glycine 109. Aspartate 110 (proton acceptor) is an active-site residue. Residues glutamine 224, threonine 226, lysine 230, arginine 257, leucine 281, glycine 302, and glutamate 326 each contribute to the ADP-D-glycero-beta-D-manno-heptose site. Residues cysteine 339, cysteine 342, cysteine 358, and cysteine 370 each contribute to the Fe(3+) site.

Belongs to the glycosyltransferase 9 family. In terms of assembly, homododecamer composed of 6 homodimers forming a ring. The cofactor is Fe(3+).

It catalyses the reaction ADP-D-glycero-beta-D-manno-heptose + L-seryl-[protein] = O-(D-glycero-alpha-D-manno-heptosyl)-L-seryl-[protein] + ADP + H(+). In terms of biological role, glycosylates adhesin TibA. Specifically adds anomer D-glycero-beta-D-manno-heptose. Cannot use ADP-L-glycero-beta-D-manno-heptose as a sugar donor. This chain is Autotransporter heptosyltransferase TibC, found in Escherichia coli O78:H11 (strain H10407 / ETEC).